The chain runs to 376 residues: MSNKSVLLIAGEPSGDLLGAHLAQSLKSLEPNLKLAGMGGKRMREAGVEVFINADKLAVVGLLEILRQFRDIRHAMQTLKRYFKKTPPDLVVFIDYPGFNLHMAKQAKKAGIKVLYYVSPQIWAWRYGRIKKIKKYVDHMAVLFDFEEKLYQKENVPVSFVGHPLANAPTPSLSRNEICKQFNLDPDKPIVALFPGSREQEINKLLPMMVQAGKLIQTQIPTVQFILPLALNLALDKIRPFLSPEIKVIQNDISYVLAIAHAAVAASGTVTLEIALQQVPLVIIYKVAPLTFWLGKKLIRLSFIGLCNLVSPEPVAVELLQQDATPQAIADEVFQLLNNHNYRQSIIGKLGHLRPQLDRGNAAQNVAKVVHNLIFS.

Belongs to the LpxB family.

The catalysed reaction is a lipid X + a UDP-2-N,3-O-bis[(3R)-3-hydroxyacyl]-alpha-D-glucosamine = a lipid A disaccharide + UDP + H(+). The protein operates within bacterial outer membrane biogenesis; LPS lipid A biosynthesis. Condensation of UDP-2,3-diacylglucosamine and 2,3-diacylglucosamine-1-phosphate to form lipid A disaccharide, a precursor of lipid A, a phosphorylated glycolipid that anchors the lipopolysaccharide to the outer membrane of the cell. In Coxiella burnetii (strain RSA 331 / Henzerling II), this protein is Lipid-A-disaccharide synthase.